A 490-amino-acid polypeptide reads, in one-letter code: Betaine aldehyde dehydrogenase (490 aa).

Residues Thr-26, Ile-27, and Asp-93 each coordinate K(+). 150-152 (GAW) lines the NAD(+) pocket. The active-site Charge relay system is Lys-162. 176 to 179 (KPSE) contributes to the NAD(+) binding site. Val-180 is a K(+) binding site. An NAD(+)-binding site is contributed by 230–233 (GVAS). Leu-246 is a K(+) binding site. Catalysis depends on Glu-252, which acts as the Proton acceptor. 3 residues coordinate NAD(+): Gly-254, Cys-286, and Glu-387. The active-site Nucleophile is Cys-286. The residue at position 286 (Cys-286) is a Cysteine sulfenic acid (-SOH). The K(+) site is built by Lys-457 and Gly-460. The active-site Charge relay system is Glu-464.

It belongs to the aldehyde dehydrogenase family. In terms of assembly, dimer of dimers. It depends on K(+) as a cofactor.

The catalysed reaction is betaine aldehyde + NAD(+) + H2O = glycine betaine + NADH + 2 H(+). It functions in the pathway amine and polyamine biosynthesis; betaine biosynthesis via choline pathway; betaine from betaine aldehyde: step 1/1. Functionally, involved in the biosynthesis of the osmoprotectant glycine betaine. Catalyzes the irreversible oxidation of betaine aldehyde to the corresponding acid. In Escherichia coli O8 (strain IAI1), this protein is Betaine aldehyde dehydrogenase.